We begin with the raw amino-acid sequence, 941 residues long: Bifunctional glutamine synthetase adenylyltransferase/adenylyl-removing enzyme (941 aa).

Positions Met-1 to Gly-431 are adenylyl removase. The interval Asn-447–Lys-941 is adenylyl transferase.

This sequence belongs to the GlnE family. It depends on Mg(2+) as a cofactor.

The enzyme catalyses [glutamine synthetase]-O(4)-(5'-adenylyl)-L-tyrosine + phosphate = [glutamine synthetase]-L-tyrosine + ADP. It catalyses the reaction [glutamine synthetase]-L-tyrosine + ATP = [glutamine synthetase]-O(4)-(5'-adenylyl)-L-tyrosine + diphosphate. In terms of biological role, involved in the regulation of glutamine synthetase GlnA, a key enzyme in the process to assimilate ammonia. When cellular nitrogen levels are high, the C-terminal adenylyl transferase (AT) inactivates GlnA by covalent transfer of an adenylyl group from ATP to specific tyrosine residue of GlnA, thus reducing its activity. Conversely, when nitrogen levels are low, the N-terminal adenylyl removase (AR) activates GlnA by removing the adenylyl group by phosphorolysis, increasing its activity. The regulatory region of GlnE binds the signal transduction protein PII (GlnB) which indicates the nitrogen status of the cell. This is Bifunctional glutamine synthetase adenylyltransferase/adenylyl-removing enzyme from Bordetella pertussis (strain Tohama I / ATCC BAA-589 / NCTC 13251).